A 2381-amino-acid polypeptide reads, in one-letter code: Protein Ycf2 (2381 aa).

1655-1662 (GPMETGRS) contacts ATP.

It belongs to the Ycf2 family.

Its subcellular location is the plastid. It localises to the chloroplast stroma. Probable ATPase of unknown function. Its presence in a non-photosynthetic plant (Epifagus virginiana) and experiments in tobacco indicate that it has an essential function which is probably not related to photosynthesis. The chain is Protein Ycf2 from Angiopteris evecta (Mule's foot fern).